A 260-amino-acid chain; its full sequence is Capsid protein (260 aa).

The Bipartite nuclear localization signal motif lies at 3-20 (KRPGDIIISTPVSKVRRR). A Nuclear localization signal motif is present at residues 41–55 (KRRSWTYRPMYRKPR). A zinc finger lies at 69 to 86 (CEGPCKVQSYEQRDDIKH). The Nuclear export signal signature appears at 102 to 123 (ITHRVGKRFCVKSIYFLGKVWM). The Bipartite nuclear localization signal motif lies at 202 to 251 (KRFFKINSHVTLFIFIQEAAKYENHTENALLLYMACTHASNPVYATMKIR).

It belongs to the geminiviridae capsid protein family. As to quaternary structure, homomultimer. Binds to single-stranded and double-stranded viral DNA. Interacts (via nuclear localization signals) with host importin alpha-1a.

Its subcellular location is the virion. It is found in the host nucleus. Functionally, encapsidates the viral genome into characteristic twinned ('geminate') particles. Binds the genomic viral ssDNA and shuttles it into and out of the cell nucleus. Plays a role in protection of the genome from degradation, virus acquisition and transmission by insect vectors, infectivity, and systemic movement. The CP of monopartite geminiviruses is absolutely essential for virus movement. This Cynanchum acutum (Little mallow) protein is Capsid protein.